Consider the following 1175-residue polypeptide: DNA-directed RNA polymerase subunit beta (1175 aa).

The interval 1142-1175 (PMELSGSDDDEFDQAGASLGINLSRDERSDADIA) is disordered. Over residues 1165–1175 (SRDERSDADIA) the composition is skewed to basic and acidic residues.

Belongs to the RNA polymerase beta chain family. In terms of assembly, the RNAP catalytic core consists of 2 alpha, 1 beta, 1 beta' and 1 omega subunit. When a sigma factor is associated with the core the holoenzyme is formed, which can initiate transcription.

It carries out the reaction RNA(n) + a ribonucleoside 5'-triphosphate = RNA(n+1) + diphosphate. Functionally, DNA-dependent RNA polymerase catalyzes the transcription of DNA into RNA using the four ribonucleoside triphosphates as substrates. This is DNA-directed RNA polymerase subunit beta from Corynebacterium diphtheriae (strain ATCC 700971 / NCTC 13129 / Biotype gravis).